A 215-amino-acid polypeptide reads, in one-letter code: Urease accessory protein UreG 2 (215 aa).

11–18 (GPVGSGKT) lines the GTP pocket.

It belongs to the SIMIBI class G3E GTPase family. UreG subfamily. Homodimer. UreD, UreF and UreG form a complex that acts as a GTP-hydrolysis-dependent molecular chaperone, activating the urease apoprotein by helping to assemble the nickel containing metallocenter of UreC. The UreE protein probably delivers the nickel.

The protein localises to the cytoplasm. Functionally, facilitates the functional incorporation of the urease nickel metallocenter. This process requires GTP hydrolysis, probably effectuated by UreG. The sequence is that of Urease accessory protein UreG 2 from Methylorubrum extorquens (strain PA1) (Methylobacterium extorquens).